Consider the following 397-residue polypeptide: Mannan endo-1,4-beta-mannosidase 1 (397 aa).

The first 23 residues, 1-23 (MSYARRSCICGLFLLFLALVCEA), serve as a signal peptide directing secretion. W83 and N198 together coordinate substrate. E199 (proton donor) is an active-site residue. Residue Y276 participates in substrate binding. The active-site Nucleophile is E316. W354 serves as a coordination point for substrate.

The protein belongs to the glycosyl hydrolase 5 (cellulase A) family.

It localises to the secreted. The catalysed reaction is Random hydrolysis of (1-&gt;4)-beta-D-mannosidic linkages in mannans, galactomannans and glucomannans.. This Solanum lycopersicum (Tomato) protein is Mannan endo-1,4-beta-mannosidase 1 (MAN1).